A 194-amino-acid polypeptide reads, in one-letter code: Peptidyl-tRNA hydrolase (194 aa).

A tRNA-binding site is contributed by Tyr-16. The Proton acceptor role is filled by His-21. Positions 67, 69, and 115 each coordinate tRNA.

It belongs to the PTH family. In terms of assembly, monomer.

It localises to the cytoplasm. The enzyme catalyses an N-acyl-L-alpha-aminoacyl-tRNA + H2O = an N-acyl-L-amino acid + a tRNA + H(+). Its function is as follows. Hydrolyzes ribosome-free peptidyl-tRNAs (with 1 or more amino acids incorporated), which drop off the ribosome during protein synthesis, or as a result of ribosome stalling. In terms of biological role, catalyzes the release of premature peptidyl moieties from peptidyl-tRNA molecules trapped in stalled 50S ribosomal subunits, and thus maintains levels of free tRNAs and 50S ribosomes. The chain is Peptidyl-tRNA hydrolase from Escherichia fergusonii (strain ATCC 35469 / DSM 13698 / CCUG 18766 / IAM 14443 / JCM 21226 / LMG 7866 / NBRC 102419 / NCTC 12128 / CDC 0568-73).